A 396-amino-acid polypeptide reads, in one-letter code: Alanine racemase (396 aa).

The active-site Proton acceptor; specific for D-alanine is Lys46. An N6-(pyridoxal phosphate)lysine modification is found at Lys46. Residue Arg145 coordinates substrate. Tyr280 (proton acceptor; specific for L-alanine) is an active-site residue. Position 328 (Met328) interacts with substrate.

Belongs to the alanine racemase family. Requires pyridoxal 5'-phosphate as cofactor.

It catalyses the reaction L-alanine = D-alanine. It functions in the pathway amino-acid biosynthesis; D-alanine biosynthesis; D-alanine from L-alanine: step 1/1. Functionally, catalyzes the interconversion of L-alanine and D-alanine. May also act on other amino acids. The protein is Alanine racemase (alr) of Brucella canis (strain ATCC 23365 / NCTC 10854 / RM-666).